The chain runs to 178 residues: Ribonuclease M5 (178 aa).

A Toprim domain is found at 10–103 (DGVIVCEGKT…NSTKIGVAEA (94 aa)). Mg(2+) is bound by residues glutamate 16, aspartate 62, and aspartate 64.

The protein belongs to the ribonuclease M5 family. Requires Mg(2+) as cofactor.

The protein localises to the cytoplasm. It catalyses the reaction Endonucleolytic cleavage of RNA, removing 21 and 42 nucleotides, respectively, from the 5'- and 3'-termini of a 5S-rRNA precursor.. Functionally, required for correct processing of both the 5' and 3' ends of 5S rRNA precursor. Cleaves both sides of a double-stranded region yielding mature 5S rRNA in one step. The polypeptide is Ribonuclease M5 (Mycoplasma pneumoniae (strain ATCC 29342 / M129 / Subtype 1) (Mycoplasmoides pneumoniae)).